The sequence spans 394 residues: Phosphoglycerate kinase (394 aa).

Substrate contacts are provided by residues Asp-21–Asn-23, Arg-36, His-59–Arg-62, Arg-118, and Arg-151. Residues Lys-202, Glu-324, and Gly-350–Ser-353 contribute to the ATP site.

Belongs to the phosphoglycerate kinase family. As to quaternary structure, monomer.

It localises to the cytoplasm. The catalysed reaction is (2R)-3-phosphoglycerate + ATP = (2R)-3-phospho-glyceroyl phosphate + ADP. It functions in the pathway carbohydrate degradation; glycolysis; pyruvate from D-glyceraldehyde 3-phosphate: step 2/5. The polypeptide is Phosphoglycerate kinase (Exiguobacterium sibiricum (strain DSM 17290 / CCUG 55495 / CIP 109462 / JCM 13490 / 255-15)).